Consider the following 376-residue polypeptide: Germination-specific cysteine protease 1 (376 aa).

The N-terminal stretch at 1 to 22 (MAPSTKVLSLLLLYVVVSLASG) is a signal peptide. The propeptide at 23–144 (DESIINDHLQ…KYSAAVNGKE (122 aa)) is activation peptide. An N-linked (GlcNAc...) asparagine glycan is attached at N93. Disulfide bonds link C166-C208, C200-C241, and C299-C351. C169 is an active-site residue. Catalysis depends on residues H305 and N325.

Belongs to the peptidase C1 family.

Functionally, probable thiol protease. The chain is Germination-specific cysteine protease 1 from Arabidopsis thaliana (Mouse-ear cress).